The primary structure comprises 925 residues: Translation initiation factor IF-2 (925 aa).

Disordered stretches follow at residues 52-84 (GGGK…VKAP) and 98-326 (AGGN…GVRL). The span at 57–68 (AEGAAKAPAKAA) shows a compositional bias: low complexity. Residues 69 to 84 (AKGDAKTAAKGDVKAP) show a composition bias toward basic and acidic residues. Low complexity predominate over residues 98–138 (AGGNGEAAAPPAQPGGTATTPAAQATPEAPARPGPAAARPS). Composition is skewed to pro residues over residues 139-169 (APAP…PAPK) and 193-207 (PRPV…PGAP). Residues 236–296 (RPGGGRPGGP…GAAGAFGRPG (61 aa)) are compositionally biased toward gly residues. The span at 300 to 309 (RRGRKSKRQK) shows a compositional bias: basic residues. In terms of domain architecture, tr-type G spans 421–592 (TRPPVVTVMG…AVLLTADAAL (172 aa)). The tract at residues 430 to 437 (GHVDHGKT) is G1. 430–437 (GHVDHGKT) contacts GTP. A G2 region spans residues 455 to 459 (GITQH). The interval 480-483 (DTPG) is G3. Residues 480 to 484 (DTPGH) and 534 to 537 (NKID) each bind GTP. The tract at residues 534-537 (NKID) is G4. Residues 570-572 (SAK) form a G5 region.

This sequence belongs to the TRAFAC class translation factor GTPase superfamily. Classic translation factor GTPase family. IF-2 subfamily.

The protein resides in the cytoplasm. Its function is as follows. One of the essential components for the initiation of protein synthesis. Protects formylmethionyl-tRNA from spontaneous hydrolysis and promotes its binding to the 30S ribosomal subunits. Also involved in the hydrolysis of GTP during the formation of the 70S ribosomal complex. This Mycolicibacterium paratuberculosis (strain ATCC BAA-968 / K-10) (Mycobacterium paratuberculosis) protein is Translation initiation factor IF-2.